The following is a 668-amino-acid chain: Protein IQ-DOMAIN 14 (668 aa).

The tract at residues 1 to 11 is calmodulin-binding; it reads MVKKGSWFSAI. Disordered regions lie at residues 16–54 and 66–305; these read TPHS…FLPI and GEAE…PRAV. A compositionally biased stretch (basic and acidic residues) spans 18 to 31; that stretch reads HSKEKLANEPERKS. The span at 32-43 shows a compositional bias: basic residues; the sequence is GKEKKKKGFGKL. Over residues 78–96 the composition is skewed to pro residues; the sequence is PPTPDRPNPYSASPPPRPA. Composition is skewed to low complexity over residues 97–120 and 166–175; these read SPRV…SPRA and PSSASANAPP. The span at 269 to 279 shows a compositional bias: pro residues; it reads PTTPKPPSPRS. IQ domains are found at residues 321 to 350 and 343 to 372; these read QHAS…LVRL and ALKG…YMQQ. Disordered stretches follow at residues 399–431 and 476–561; these read AKWA…KTDA and SPAP…SLTS. Positions 415–431 are enriched in basic and acidic residues; the sequence is VLTKEERDSRSQRKTDA. The span at 516–529 shows a compositional bias: polar residues; the sequence is DTSTPRSSRSTFHT.

The protein belongs to the IQD family. In terms of assembly, binds to multiple calmodulin (CaM) in the presence of Ca(2+) and CaM-like proteins. Expressed in hypocotyls, cotyledons, leaves and petioles.

The protein resides in the cell membrane. The protein localises to the cytoplasm. Its subcellular location is the cytoskeleton. In terms of biological role, may be involved in cooperative interactions with calmodulins or calmodulin-like proteins. Recruits calmodulin proteins to microtubules, thus being a potential scaffold in cellular signaling and trafficking. Regulates cell and organ shapes (prevents twisting) in aerial parts probably by regulating transverse microtubules (MT) arrays alignment. Regulates the formation of oval xylem secondary cell-wall deposition pits through microtubule-dependent lateral inhibition of Rho GTPase domains, thus confining the area of active ROP domains within the lattice of the cortical microtubules. May associate with nucleic acids and regulate gene expression at the transcriptional or post-transcriptional level. This chain is Protein IQ-DOMAIN 14, found in Arabidopsis thaliana (Mouse-ear cress).